Consider the following 342-residue polypeptide: Trans-3-hydroxy-L-proline dehydratase (342 aa).

Ser90 serves as the catalytic Proton acceptor. Substrate is bound by residues 91–92 (GS), Asp251, and 256–257 (GT).

Belongs to the proline racemase family.

The catalysed reaction is trans-3-hydroxy-L-proline = 1-pyrroline-2-carboxylate + H2O. Functionally, catalyzes the dehydration of trans-3-hydroxy-L-proline (t3LHyp) to Delta(1)-pyrroline-2-carboxylate (Pyr2C). Is likely involved in a degradation pathway that converts t3LHyp to L-proline, which would allow P.denitrificans to grow on t3LHyp as a sole carbon source. Displays neither proline racemase activity nor 4-hydroxyproline 2-epimerase activity. The sequence is that of Trans-3-hydroxy-L-proline dehydratase from Paracoccus denitrificans (strain Pd 1222).